The primary structure comprises 148 residues: Deoxyuridine 5'-triphosphate nucleotidohydrolase (148 aa).

Residues Arg67 to Gly69, Asn80, Leu84 to Asp86, and Met94 contribute to the substrate site.

This sequence belongs to the dUTPase family. The cofactor is Mg(2+).

The catalysed reaction is dUTP + H2O = dUMP + diphosphate + H(+). Its pathway is pyrimidine metabolism; dUMP biosynthesis; dUMP from dCTP (dUTP route): step 2/2. Functionally, this enzyme is involved in nucleotide metabolism: it produces dUMP, the immediate precursor of thymidine nucleotides and it decreases the intracellular concentration of dUTP so that uracil cannot be incorporated into DNA. The polypeptide is Deoxyuridine 5'-triphosphate nucleotidohydrolase (Burkholderia cenocepacia (strain HI2424)).